Reading from the N-terminus, the 59-residue chain is Small ribosomal subunit protein bS21 (59 aa).

A disordered region spans residues 36–59 (EHYEKPSVKRKKKAEAAKRNKSKF). The segment covering 43 to 59 (VKRKKKAEAAKRNKSKF) has biased composition (basic residues).

It belongs to the bacterial ribosomal protein bS21 family.

In Alkaliphilus oremlandii (strain OhILAs) (Clostridium oremlandii (strain OhILAs)), this protein is Small ribosomal subunit protein bS21.